Reading from the N-terminus, the 198-residue chain is Putative peptidyl-prolyl cis-trans isomerase (198 aa).

The 182-residue stretch at 14–195 folds into the PPIase cyclophilin-type domain; that stretch reads NEIKVAMHTN…HDVVIESIDV (182 aa).

It belongs to the cyclophilin-type PPIase family.

The catalysed reaction is [protein]-peptidylproline (omega=180) = [protein]-peptidylproline (omega=0). PPIases accelerate the folding of proteins. It catalyzes the cis-trans isomerization of proline imidic peptide bonds in oligopeptides. This Staphylococcus haemolyticus (strain JCSC1435) protein is Putative peptidyl-prolyl cis-trans isomerase.